Here is a 449-residue protein sequence, read N- to C-terminus: Probable protoheme IX farnesyltransferase, mitochondrial (449 aa).

Over residues 99 to 138 (TTSTTTTTNINENNIKNENNNENNNENSNNNNEQSIKSNQ) the composition is skewed to low complexity. Residues 99–140 (TTSTTTTTNINENNIKNENNNENNNENSNNNNEQSIKSNQTK) form a disordered region. Transmembrane regions (helical) follow at residues 163–183 (LTAIAGYVAACPIGAFDWVVL), 245–267 (MAVTPSLFVPGTLAACNVILYCW), 279–299 (TWIGAFVGAIPPLIGSVAATG), 303–323 (AIGMLLATFMYIWQIPHFLAL), 352–372 (SLAHALFGIPLPFIFDYFFNF), 374–394 (VHPITLTCMALSSASLALPFI), and 402–422 (LYIISLISLPITLFLSCLLRQ).

It belongs to the UbiA prenyltransferase family.

The protein resides in the mitochondrion membrane. Functionally, converts protoheme IX and farnesyl diphosphate to heme O. This chain is Probable protoheme IX farnesyltransferase, mitochondrial (cox10), found in Dictyostelium discoideum (Social amoeba).